Here is a 258-residue protein sequence, read N- to C-terminus: Malonyl-[acyl-carrier protein] O-methyltransferase (258 aa).

Belongs to the methyltransferase superfamily.

It catalyses the reaction malonyl-[ACP] + S-adenosyl-L-methionine = malonyl-[ACP] methyl ester + S-adenosyl-L-homocysteine. Its pathway is cofactor biosynthesis; biotin biosynthesis. In terms of biological role, converts the free carboxyl group of a malonyl-thioester to its methyl ester by transfer of a methyl group from S-adenosyl-L-methionine (SAM). It allows to synthesize pimeloyl-ACP via the fatty acid synthetic pathway. This chain is Malonyl-[acyl-carrier protein] O-methyltransferase, found in Haemophilus ducreyi (strain 35000HP / ATCC 700724).